A 691-amino-acid chain; its full sequence is Elongation factor G (691 aa).

A tr-type G domain is found at 8 to 283 (EDYRNIGIMA…AVVDFLPSPL (276 aa)). Residues 17 to 24 (AHIDAGKT), 81 to 85 (DTPGH), and 135 to 138 (NKMD) contribute to the GTP site.

This sequence belongs to the TRAFAC class translation factor GTPase superfamily. Classic translation factor GTPase family. EF-G/EF-2 subfamily.

It localises to the cytoplasm. In terms of biological role, catalyzes the GTP-dependent ribosomal translocation step during translation elongation. During this step, the ribosome changes from the pre-translocational (PRE) to the post-translocational (POST) state as the newly formed A-site-bound peptidyl-tRNA and P-site-bound deacylated tRNA move to the P and E sites, respectively. Catalyzes the coordinated movement of the two tRNA molecules, the mRNA and conformational changes in the ribosome. This chain is Elongation factor G, found in Parvibaculum lavamentivorans (strain DS-1 / DSM 13023 / NCIMB 13966).